The following is a 115-amino-acid chain: Guanylin (115 aa).

The signal sequence occupies residues 1–21; it reads MNAFLLSALCLLGAWAALAGG. 3 disulfides stabilise this stretch: Cys-69–Cys-82, Cys-104–Cys-112, and Cys-107–Cys-115.

It belongs to the guanylin family. Highly expressed in ileum and colon. Found in plasma.

It is found in the secreted. In terms of biological role, endogenous activator of intestinal guanylate cyclase. It stimulates this enzyme through the same receptor binding region as the heat-stable enterotoxins. The protein is Guanylin (GUCA2A) of Homo sapiens (Human).